A 213-amino-acid chain; its full sequence is Cell wall protein PGA62 (213 aa).

A signal peptide spans 1–18; sequence MQFSSAVVLSAVAGSALA. Asn22 carries N-linked (GlcNAc...) asparagine glycosylation. A disordered region spans residues 120–194; sequence CPLPSTEAPG…APAVSTAEAG (75 aa). Polar residues predominate over residues 145–172; that stretch reads PVPTTAAESSPAKTTAAESSPAQETTPK. Over residues 173-194 the composition is skewed to low complexity; sequence TVAAESSSAETTAPAVSTAEAG. Gly194 carries the GPI-anchor amidated glycine lipid modification. A propeptide spans 195-213 (removed in mature form); sequence AAANAVPVAAGLLALAALF.

The protein belongs to the HWP1 family. In terms of processing, N- and O-glycosylated. The GPI-anchor is attached to the protein in the endoplasmic reticulum and serves to target the protein to the cell surface. There, the glucosamine-inositol phospholipid moiety is cleaved off and the GPI-modified mannoprotein is covalently attached via its lipidless GPI glycan remnant to the 1,6-beta-glucan of the outer cell wall layer.

It localises to the secreted. The protein resides in the cell wall. The protein localises to the membrane. In terms of biological role, cell wall protein necessary for cell wall integrity. Plays only a minor role in hyphal morphogenesis and is not critical to biofilm formation. In Candida albicans (strain SC5314 / ATCC MYA-2876) (Yeast), this protein is Cell wall protein PGA62 (PGA62).